The following is a 365-amino-acid chain: Carbamoyl phosphate synthase small chain (365 aa).

CPSase stretches follow at residues 1–166 (MKRQ…PSPG) and 1–169 (MKRQ…GRGH). L-glutamine is bound by residues Ser45, Gly218, and Gly220. A Glutamine amidotransferase type-1 domain is found at 170–357 (RVVLVDFGMK…LTMIENFKKE (188 aa)). The active-site Nucleophile is the Cys245. The L-glutamine site is built by Leu246, Gln249, Asn287, Gly289, and Tyr290. Residues His330 and Glu332 contribute to the active site.

This sequence belongs to the CarA family. As to quaternary structure, composed of two chains; the small (or glutamine) chain promotes the hydrolysis of glutamine to ammonia, which is used by the large (or ammonia) chain to synthesize carbamoyl phosphate. Tetramer of heterodimers (alpha,beta)4.

It carries out the reaction hydrogencarbonate + L-glutamine + 2 ATP + H2O = carbamoyl phosphate + L-glutamate + 2 ADP + phosphate + 2 H(+). The catalysed reaction is L-glutamine + H2O = L-glutamate + NH4(+). It functions in the pathway amino-acid biosynthesis; L-arginine biosynthesis; carbamoyl phosphate from bicarbonate: step 1/1. Its pathway is pyrimidine metabolism; UMP biosynthesis via de novo pathway; (S)-dihydroorotate from bicarbonate: step 1/3. Small subunit of the glutamine-dependent carbamoyl phosphate synthetase (CPSase). CPSase catalyzes the formation of carbamoyl phosphate from the ammonia moiety of glutamine, carbonate, and phosphate donated by ATP, constituting the first step of 2 biosynthetic pathways, one leading to arginine and/or urea and the other to pyrimidine nucleotides. The small subunit (glutamine amidotransferase) binds and cleaves glutamine to supply the large subunit with the substrate ammonia. The protein is Carbamoyl phosphate synthase small chain of Bacillus cereus (strain ATCC 14579 / DSM 31 / CCUG 7414 / JCM 2152 / NBRC 15305 / NCIMB 9373 / NCTC 2599 / NRRL B-3711).